Reading from the N-terminus, the 314-residue chain is tRNA dimethylallyltransferase (314 aa).

12 to 19 lines the ATP pocket; that stretch reads GPTASGKT. 14-19 is a binding site for substrate; sequence TASGKT. Interaction with substrate tRNA stretches follow at residues 37-40 and 162-166; these read DSAL and QRIIR.

It belongs to the IPP transferase family. As to quaternary structure, monomer. Mg(2+) serves as cofactor.

The enzyme catalyses adenosine(37) in tRNA + dimethylallyl diphosphate = N(6)-dimethylallyladenosine(37) in tRNA + diphosphate. Catalyzes the transfer of a dimethylallyl group onto the adenine at position 37 in tRNAs that read codons beginning with uridine, leading to the formation of N6-(dimethylallyl)adenosine (i(6)A). This chain is tRNA dimethylallyltransferase, found in Acinetobacter baumannii (strain SDF).